The following is a 445-amino-acid chain: Gasdermin-A (445 aa).

The tract at residues 1–251 is triggers pyroptosis; sequence MTMFENVTRA…VILIQASDVG (251 aa). 9 to 13 contacts a cardiolipin; sequence RALAR. Beta stranded transmembrane passes span 78-95, 99-120, 163-179, and 183-197; these read NFGF…DVDV, VKVK…TLSV, VTLE…SLPF, and LGLQ…AVTI.

The protein belongs to the gasdermin family. As to quaternary structure, homooligomer; homooligomeric ring-shaped pore complex containing 18-36 subunits when inserted in the membrane. Cleavage by S.pyogenes SpeB relieves autoinhibition by releasing the N-terminal moiety (Gasdermin-A, N-terminal) that initiates pyroptosis. Post-translationally, palmitoylated. In terms of tissue distribution, expressed predominantly in the gastrointestinal tract and, at a lower level, in the skin. Also detected in mammary gland. In the gastrointestinal tract, mainly expressed in differentiated cells, including the differentiated cell layer of esophagus and mucus-secreting pit cells of the gastric epithelium. Down-regulated in gastric cancer cells.

Its subcellular location is the cytoplasm. The protein resides in the perinuclear region. It is found in the cytosol. It localises to the cell membrane. With respect to regulation, the full-length protein before cleavage is inactive: intramolecular interactions between N- and C-terminal domains mediate autoinhibition in the absence of activation signal. The intrinsic pyroptosis-inducing activity is carried by the released N-terminal moiety (Gasdermin-A, N-terminal) following cleavage by S.pyogenes effector protein SpeB. Its function is as follows. This form constitutes the precursor of the pore-forming protein and acts as a sensor of infection: upon infection by S.pyogenes, specifically cleaved by S.pyogenes effector protein SpeB in epithelial cells, releasing the N-terminal moiety (Gasdermin-A, N-terminal) that binds to membranes and forms pores, triggering pyroptosis. In terms of biological role, pore-forming protein that causes membrane permeabilization and pyroptosis. Released upon cleavage by S.pyogenes effector protein SpeB, and binds to membrane inner leaflet lipids. Homooligomerizes within the membrane and forms pores of 10-15 nanometers (nm) of inner diameter, triggering pyroptosis. Pyroptosis triggers the elimination of the infected skin cell, depriving the pathogen of its protective niche, while inducing an inflammatory response. This ultimately prevents bacterial penetration of the epithelial barrier and a subsequent systemic dissemination of the pathogen. Binds to cardiolipin and other acidic phospholipids, such as phosphatidylserine, which mediate its targeting to the inner leaflet membrane. The sequence is that of Gasdermin-A from Homo sapiens (Human).